A 1073-amino-acid chain; its full sequence is MMKVIWFSSLICFVIQCSGDSGPIICAGPIHSNKSADIPHLLGYSEKICQIDRLIHVSSWLRNHSQFQGYVGQRGGRSQVSYYPAENSYSRWSGLLSPCDADWLGMLVVKKAKGSDMIVPGPSYKGKVFFERPTFDGYVGWGCGSGKSRTESGELCSSDSGTSSGLLPSDRVLWIGDVACQPMTPIPEETFLELKSFSQSEFPDICKIDGIVFNQCEGESLPQPFDVAWMDVGHSHKIIMREHKTKWVQESSSKDFVCYKEGTGPCSESEEKTCKTSGSCRGDMQFCKVAGCEHGEEASEAKCRCSLVHKPGEVVVSYGGMRVRPKCYGFSRMMATLEVNQPEQRLGQCTGCHLECINGGVRLITLTSELKSATVCASHFCSSATSGKKSTEIQFHSGSLVGKTAIHVKGALVDGTEFTFEGSCMFPDGCDAVDCTFCREFLKNPQCYPAKKWLFIIIVILLGYAGLMLLTNVLKAIGIWGSWVIAPVKLMFAIIKKLMRTVSCLMRKLMDRGRQVIHEEIGENREGNQDDVRIEMARPRRVRHWMYSPVILTILAIGLAESCDEMVHADSKLVSCRQGSGNMKECVTTGRALLPAVNPGQEACLHFTAPGSPDSKCLKIKVKRINLKCKKSSSYFVPDARSRCTSVRRCRWAGDCQSGCPPHFTSNSFSDDWAGKMDRAGLGFSGCSDGCGGAACGCFNAAPSCIFWRKWVENPHGIIWKVSPCAAWVPSAVIELTMPSGEVRTFHPMSGIPTQVFKGVSVTYLGSDMEVSGLTDLCEIEELKSKKLALAPCNQAGMGVVGKVGEIQCSSEESARTIKKDGCIWNADLVGIELRVDDAVCYSKITSVEAVANYSAIPTTIGGLRFERSHDSQGKISGSPLDITAIRGSFSVNYRGLRLSLSEITATCTGEVTNVSGCYSCMTGAKVSIKLHSSKNSTAHVRCKGDETAFSVLEGVHSYTVSLSFDHAVVDEQCQLNCGGHESQVTLKGNLIFLDVPKFVDGSYMQTYHSTVPTGANIPSPTDWLNALFGNGLSRWILGVIGVLLGGLALFFMIMSLFKLGTKQVFRSRTKLA.

A signal peptide spans 1–19 (MMKVIWFSSLICFVIQCSG). Residues 20–453 (DSGPIICAGP…NPQCYPAKKW (434 aa)) are Lumenal-facing. Cys-26 and Cys-49 are joined by a disulfide. Residues Asn-33 and Asn-63 are each glycosylated (N-linked (GlcNAc...) asparagine; by host). Cystine bridges form between Cys-143–Cys-156, Cys-180–Cys-327, Cys-206–Cys-216, Cys-258–Cys-305, Cys-266–Cys-303, Cys-274–Cys-280, Cys-287–Cys-292, Cys-349–Cys-352, Cys-356–Cys-424, and Cys-376–Cys-381. Residues 454 to 474 (LFIIIVILLGYAGLMLLTNVL) traverse the membrane as a helical segment. A golgi retention signal region spans residues 475–521 (KAIGIWGSWVIAPVKLMFAIIKKLMRTVSCLMRKLMDRGRQVIHEEI). The Cytoplasmic portion of the chain corresponds to 475-535 (KAIGIWGSWV…EGNQDDVRIE (61 aa)). Residues 536-562 (MARPRRVRHWMYSPVILTILAIGLAES) form an internal signal sequence for glycoprotein C region. Intrachain disulfides connect Cys-563/Cys-604, Cys-576/Cys-586, Cys-629/Cys-725, Cys-644/Cys-841, Cys-650/Cys-698, Cys-656/Cys-705, Cys-660/Cys-687, Cys-691/Cys-696, Cys-778/Cys-793, and Cys-809/Cys-823. Residues 563 to 1036 (CDEMVHADSK…ALFGNGLSRW (474 aa)) are Lumenal-facing. Residues 650-656 (CRWAGDC) are fusion loop. The segment at 691–705 (CGGAACGCFNAAPSC) is fusion loop. N-linked (GlcNAc...) asparagine; by host glycans are attached at residues Asn-853 and Asn-914. 3 cysteine pairs are disulfide-bonded: Cys-908–Cys-978, Cys-918–Cys-921, and Cys-943–Cys-974. Asn-936 is a glycosylation site (N-linked (GlcNAc...) asparagine; by host). A helical transmembrane segment spans residues 1037 to 1057 (ILGVIGVLLGGLALFFMIMSL). At 1058–1073 (FKLGTKQVFRSRTKLA) the chain is on the cytoplasmic side.

The protein belongs to the phlebovirus envelope glycoprotein family. As to quaternary structure, homodimer. Heterodimer with glycoprotein C. Homotrimer (postfusion). Heterodimer with glycoprotein N. In terms of processing, specific enzymatic cleavages in vivo yield mature proteins including glycoprotein C and glycoprotein N. Post-translationally, the cytoplasmic tail is Palmitoylated. Glycosylated. In terms of processing, palmitoylated.

The protein localises to the virion membrane. The protein resides in the host Golgi apparatus membrane. It localises to the host endoplasmic reticulum membrane. In terms of biological role, structural component of the virion that interacts with glycoprotein C. It shields the hydrophobic fusion loops of the glycoprotein C, preventing premature fusion. The glycoprotein protrusions are arranged on an icosahedral lattice, with T=12 triangulation. They are able to attach the virion to the host cell receptor CD209/DC-SIGN and to promote fusion of membranes with the late endosome after clathrin-mediated endocytosis of the virion. Plays a role in the packaging of ribonucleoproteins during virus assembly. Functionally, structural component of the virion that interacts with glycoprotein N. Acts as a class II fusion protein that is activated upon acidification and subsequent repositioning of the glycoprotein N. The glycoprotein protrusions are arranged on an icosahedral lattice, with T=12 triangulation. They are able to attach the virion to the host cell receptor CD209/DC-SIGN and to promote fusion of membranes with the late endosome after clathrin-mediated endocytosis of the virion. The protein is Envelopment polyprotein of Dabie bandavirus (Severe fever with thrombocytopenia virus).